The primary structure comprises 465 residues: Argininosuccinate lyase (465 aa).

The protein belongs to the lyase 1 family. Argininosuccinate lyase subfamily.

The protein localises to the cytoplasm. It catalyses the reaction 2-(N(omega)-L-arginino)succinate = fumarate + L-arginine. Its pathway is amino-acid biosynthesis; L-arginine biosynthesis; L-arginine from L-ornithine and carbamoyl phosphate: step 3/3. The polypeptide is Argininosuccinate lyase (Bradyrhizobium diazoefficiens (strain JCM 10833 / BCRC 13528 / IAM 13628 / NBRC 14792 / USDA 110)).